The following is a 173-amino-acid chain: Crossover junction endodeoxyribonuclease RuvC (173 aa).

Catalysis depends on residues D11, E71, and D143. 3 residues coordinate Mg(2+): D11, E71, and D143.

This sequence belongs to the RuvC family. As to quaternary structure, homodimer which binds Holliday junction (HJ) DNA. The HJ becomes 2-fold symmetrical on binding to RuvC with unstacked arms; it has a different conformation from HJ DNA in complex with RuvA. In the full resolvosome a probable DNA-RuvA(4)-RuvB(12)-RuvC(2) complex forms which resolves the HJ. Mg(2+) serves as cofactor.

The protein resides in the cytoplasm. The enzyme catalyses Endonucleolytic cleavage at a junction such as a reciprocal single-stranded crossover between two homologous DNA duplexes (Holliday junction).. In terms of biological role, the RuvA-RuvB-RuvC complex processes Holliday junction (HJ) DNA during genetic recombination and DNA repair. Endonuclease that resolves HJ intermediates. Cleaves cruciform DNA by making single-stranded nicks across the HJ at symmetrical positions within the homologous arms, yielding a 5'-phosphate and a 3'-hydroxyl group; requires a central core of homology in the junction. The consensus cleavage sequence is 5'-(A/T)TT(C/G)-3'. Cleavage occurs on the 3'-side of the TT dinucleotide at the point of strand exchange. HJ branch migration catalyzed by RuvA-RuvB allows RuvC to scan DNA until it finds its consensus sequence, where it cleaves and resolves the cruciform DNA. The chain is Crossover junction endodeoxyribonuclease RuvC from Brucella suis biovar 1 (strain 1330).